Here is a 120-residue protein sequence, read N- to C-terminus: Large ribosomal subunit protein bL20 (120 aa).

It belongs to the bacterial ribosomal protein bL20 family.

Binds directly to 23S ribosomal RNA and is necessary for the in vitro assembly process of the 50S ribosomal subunit. It is not involved in the protein synthesizing functions of that subunit. This is Large ribosomal subunit protein bL20 from Ureaplasma parvum serovar 3 (strain ATCC 27815 / 27 / NCTC 11736).